A 456-amino-acid polypeptide reads, in one-letter code: Glycosyl hydrolase family 109 protein (456 aa).

Positions 1–31 (MKLNRRHFLKTAGLSAAGILTSQLPLSSAEA) form a signal peptide, tat-type signal. NAD(+) is bound by residues 62 to 63 (QR), aspartate 84, 133 to 136 (WEWH), 153 to 154 (EV), and asparagine 182. Substrate is bound by residues tyrosine 211, arginine 230, 242–245 (YPTH), and tyrosine 324. Tyrosine 242 provides a ligand contact to NAD(+).

Belongs to the Gfo/Idh/MocA family. Glycosyl hydrolase 109 subfamily. Requires NAD(+) as cofactor. In terms of processing, predicted to be exported by the Tat system. The position of the signal peptide cleavage has not been experimentally proven.

In terms of biological role, glycosidase. This chain is Glycosyl hydrolase family 109 protein, found in Shewanella pealeana (strain ATCC 700345 / ANG-SQ1).